A 186-amino-acid polypeptide reads, in one-letter code: MSIEIITGPMYSGKTTELIRRITRYKLCKKNCVIISHSIDNRCEEDDNILINHDGFKISHDDFIKTNILINKIKIFDKYEIIGIDECQFFDSNDLMIFCDTLANNGKKIIVAGLNSDFNKNPFKSIIKLIPISEKITKLQSICNFCYNDATFTMKKFNKDIIIEIGGSDLYIPVCRICYNENNTIN.

8 to 15 (GPMYSGKT) provides a ligand contact to ATP. E86 serves as the catalytic Proton acceptor. F118 contributes to the substrate binding site. 2 residues coordinate Zn(2+): C143 and C146. 162 to 166 (IIEIG) provides a ligand contact to substrate. Residues C175 and C178 each contribute to the Zn(2+) site.

The protein belongs to the thymidine kinase family.

It carries out the reaction thymidine + ATP = dTMP + ADP + H(+). The chain is Thymidine kinase (TK) from Choristoneura fumiferana (Spruce budworm moth).